A 271-amino-acid chain; its full sequence is Phosphonoacetaldehyde hydrolase (271 aa).

Asp-12 acts as the Nucleophile in catalysis. The Mg(2+) site is built by Asp-12 and Ala-14. Lys-54 (schiff-base intermediate with substrate) is an active-site residue. Asp-188 contributes to the Mg(2+) binding site.

The protein belongs to the HAD-like hydrolase superfamily. PhnX family. As to quaternary structure, homodimer. It depends on Mg(2+) as a cofactor.

It carries out the reaction phosphonoacetaldehyde + H2O = acetaldehyde + phosphate + H(+). Functionally, involved in phosphonate degradation. This Vibrio vulnificus (strain CMCP6) protein is Phosphonoacetaldehyde hydrolase.